We begin with the raw amino-acid sequence, 212 residues long: ATP-dependent Clp protease proteolytic subunit (212 aa).

S114 (nucleophile) is an active-site residue. H139 is a catalytic residue.

Belongs to the peptidase S14 family. Fourteen ClpP subunits assemble into 2 heptameric rings which stack back to back to give a disk-like structure with a central cavity, resembling the structure of eukaryotic proteasomes.

It localises to the cytoplasm. The catalysed reaction is Hydrolysis of proteins to small peptides in the presence of ATP and magnesium. alpha-casein is the usual test substrate. In the absence of ATP, only oligopeptides shorter than five residues are hydrolyzed (such as succinyl-Leu-Tyr-|-NHMec, and Leu-Tyr-Leu-|-Tyr-Trp, in which cleavage of the -Tyr-|-Leu- and -Tyr-|-Trp bonds also occurs).. Functionally, cleaves peptides in various proteins in a process that requires ATP hydrolysis. Has a chymotrypsin-like activity. Plays a major role in the degradation of misfolded proteins. This chain is ATP-dependent Clp protease proteolytic subunit, found in Azoarcus sp. (strain BH72).